A 139-amino-acid polypeptide reads, in one-letter code: Protein GOS9 (139 aa).

Residues 5–139 (LVKIGTWGGN…VDSIGVYVHI (135 aa)) form the Jacalin-type lectin domain.

In terms of tissue distribution, expressed mainly in roots.

This Oryza sativa subsp. indica (Rice) protein is Protein GOS9 (GOS9).